A 134-amino-acid polypeptide reads, in one-letter code: Small ribosomal subunit protein uS11 (134 aa).

It belongs to the universal ribosomal protein uS11 family. Part of the 30S ribosomal subunit. Interacts with proteins S7 and S18. Binds to IF-3.

In terms of biological role, located on the platform of the 30S subunit, it bridges several disparate RNA helices of the 16S rRNA. Forms part of the Shine-Dalgarno cleft in the 70S ribosome. This is Small ribosomal subunit protein uS11 from Polaromonas sp. (strain JS666 / ATCC BAA-500).